A 147-amino-acid polypeptide reads, in one-letter code: Hemoglobin subunit beta-A/B (147 aa).

The Globin domain maps to glutamate 2–histidine 147. Residues histidine 63 and histidine 92 each coordinate heme b.

Belongs to the globin family. Heterotetramer of two alpha chains and two beta chains. Red blood cells.

In terms of biological role, involved in oxygen transport from gills to the various peripheral tissues. In Cyprinus carpio (Common carp), this protein is Hemoglobin subunit beta-A/B.